We begin with the raw amino-acid sequence, 858 residues long: Leucine--tRNA ligase (858 aa).

The 'HIGH' region motif lies at 42–52 (PYPSGRLHMGH). Residues 618–622 (KMSKS) carry the 'KMSKS' region motif. Residue K621 participates in ATP binding.

The protein belongs to the class-I aminoacyl-tRNA synthetase family.

It localises to the cytoplasm. The enzyme catalyses tRNA(Leu) + L-leucine + ATP = L-leucyl-tRNA(Leu) + AMP + diphosphate. In Vibrio cholerae serotype O1 (strain ATCC 39541 / Classical Ogawa 395 / O395), this protein is Leucine--tRNA ligase.